A 527-amino-acid chain; its full sequence is Pyruvate kinase 2, cytosolic (527 aa).

Arginine 58 contacts substrate. Aspartate 60, serine 62, aspartate 92, and threonine 93 together coordinate K(+). 60-63 is an ATP binding site; the sequence is DFSW. Substrate is bound at residue lysine 256. Glutamate 258 is a binding site for Mg(2+). Substrate-binding residues include glycine 281, asparagine 282, and threonine 313. A Mg(2+)-binding site is contributed by asparagine 282.

It belongs to the pyruvate kinase family. As to quaternary structure, homotetramer. Requires Mg(2+) as cofactor. K(+) is required as a cofactor.

The protein localises to the cytoplasm. It localises to the cytosol. It carries out the reaction pyruvate + ATP = phosphoenolpyruvate + ADP + H(+). It participates in carbohydrate degradation; glycolysis; pyruvate from D-glyceraldehyde 3-phosphate: step 5/5. Key regulatory enzyme of the glycolytic pathway that catalyzes the final step of glycolysis, converting ADP and phosphoenolpyruvate (PEP) to ATP and pyruvate by essentially irreversible transphosphorylation. In Oryza sativa subsp. indica (Rice), this protein is Pyruvate kinase 2, cytosolic.